Consider the following 352-residue polypeptide: MIQTEEMNQLKADALADISQAADEKALQDVKVKYLGKKGSVSGLMKQMKDLSNEEKPKFGQAVNEVRQAIESAIADRKSVLEQDRLNKQLEEETIDVTLPSRSIKLGATHPLTRTIQEIEDLFLGLGFEIVNGYEVEQDYYNFEALNLPKSHPARDMQDTFYITEETLLRTHTSPVQARTLEKRNGQGPVKIICPGKVYRRDSDDATHSHQFTQIEGLVVAENIKMSDLKGTLELVAKKLFGEEREIRLRPSYFPFTEPSVEVDVSCFKCGGKGCNVCKQTGWIEILGAGMVHPNVLEMAGFDSSKYTGFAFGMGPDRIAMLKYGIEDIRYFYTNDVRFLDQFKAVEDRGEA.

E258 contributes to the Mg(2+) binding site.

The protein belongs to the class-II aminoacyl-tRNA synthetase family. Phe-tRNA synthetase alpha subunit type 1 subfamily. Tetramer of two alpha and two beta subunits. Mg(2+) serves as cofactor.

It is found in the cytoplasm. The enzyme catalyses tRNA(Phe) + L-phenylalanine + ATP = L-phenylalanyl-tRNA(Phe) + AMP + diphosphate + H(+). In Staphylococcus carnosus (strain TM300), this protein is Phenylalanine--tRNA ligase alpha subunit.